Here is a 420-residue protein sequence, read N- to C-terminus: Mitogen-activated protein kinase HOG2 (420 aa).

Residues 29 to 37 (VGMGAFGLV) and K52 each bind ATP. The Proton acceptor role is filled by D144. The residue at position 174 (T174) is a Phosphothreonine. The TXY signature appears at 174 to 176 (TGY). At Y176 the chain carries Phosphotyrosine. Residues 372–394 (AQHHHQTQQQSSGKHTNPTTSSS) form a disordered region.

Belongs to the protein kinase superfamily. Ser/Thr protein kinase family. MAP kinase subfamily. HOG1 sub-subfamily. It depends on Mg(2+) as a cofactor. In terms of processing, dually phosphorylated on Thr-174 and Tyr-176, which activates the enzyme.

It is found in the cytoplasm. It localises to the nucleus. The enzyme catalyses L-seryl-[protein] + ATP = O-phospho-L-seryl-[protein] + ADP + H(+). It carries out the reaction L-threonyl-[protein] + ATP = O-phospho-L-threonyl-[protein] + ADP + H(+). Its activity is regulated as follows. Activated by tyrosine and threonine phosphorylation. Mitogen-activated protein kinase involved in a signal transduction pathway that is activated by changes in the osmolarity of the extracellular environment. Controls osmotic regulation of transcription of target genes. The chain is Mitogen-activated protein kinase HOG2 (HOG2) from Zygosaccharomyces rouxii.